The following is a 206-amino-acid chain: Ribosomal RNA small subunit methyltransferase G (206 aa).

S-adenosyl-L-methionine-binding positions include Gly-73, Leu-78, 124–125 (VE), and Arg-139.

This sequence belongs to the methyltransferase superfamily. RNA methyltransferase RsmG family.

The protein resides in the cytoplasm. It catalyses the reaction guanosine(527) in 16S rRNA + S-adenosyl-L-methionine = N(7)-methylguanosine(527) in 16S rRNA + S-adenosyl-L-homocysteine. Its function is as follows. Specifically methylates the N7 position of guanine in position 527 of 16S rRNA. This chain is Ribosomal RNA small subunit methyltransferase G, found in Photobacterium profundum (strain SS9).